The primary structure comprises 142 residues: Large ribosomal subunit protein uL13 (142 aa).

Belongs to the universal ribosomal protein uL13 family. In terms of assembly, part of the 50S ribosomal subunit.

In terms of biological role, this protein is one of the early assembly proteins of the 50S ribosomal subunit, although it is not seen to bind rRNA by itself. It is important during the early stages of 50S assembly. This chain is Large ribosomal subunit protein uL13, found in Psychrobacter sp. (strain PRwf-1).